Consider the following 449-residue polypeptide: Tubulin alpha-1C chain (449 aa).

Positions 1–4 (MREC) match the MREC motif motif. Gln-11 contributes to the GTP binding site. The residue at position 40 (Lys-40) is an N6-acetyllysine. Glu-71, Ser-140, Gly-144, Thr-145, Thr-179, Asn-206, and Asn-228 together coordinate GTP. Glu-71 serves as a coordination point for Mg(2+). Residue Glu-254 is part of the active site. At Tyr-282 the chain carries 3'-nitrotyrosine. Tyr-432 is subject to Phosphotyrosine. The residue at position 439 (Ser-439) is a Phosphoserine. Tyr-449 bears the 3'-nitrotyrosine mark.

It belongs to the tubulin family. As to quaternary structure, dimer of alpha and beta chains. A typical microtubule is a hollow water-filled tube with an outer diameter of 25 nm and an inner diameter of 15 nM. Alpha-beta heterodimers associate head-to-tail to form protofilaments running lengthwise along the microtubule wall with the beta-tubulin subunit facing the microtubule plus end conferring a structural polarity. Microtubules usually have 13 protofilaments but different protofilament numbers can be found in some organisms and specialized cells. It depends on Mg(2+) as a cofactor. Some glutamate residues at the C-terminus are polyglycylated, resulting in polyglycine chains on the gamma-carboxyl group. Glycylation is mainly limited to tubulin incorporated into axonemes (cilia and flagella) whereas glutamylation is prevalent in neuronal cells, centrioles, axonemes, and the mitotic spindle. Both modifications can coexist on the same protein on adjacent residues, and lowering polyglycylation levels increases polyglutamylation, and reciprocally. Cilia and flagella glycylation is required for their stability and maintenance. Flagella glycylation controls sperm motility. Post-translationally, some glutamate residues at the C-terminus are polyglutamylated, resulting in polyglutamate chains on the gamma-carboxyl group. Polyglutamylation plays a key role in microtubule severing by spastin (SPAST). SPAST preferentially recognizes and acts on microtubules decorated with short polyglutamate tails: severing activity by SPAST increases as the number of glutamates per tubulin rises from one to eight, but decreases beyond this glutamylation threshold. Glutamylation is also involved in cilia motility. In terms of processing, acetylation of alpha chains at Lys-40 is located inside the microtubule lumen. This modification has been correlated with increased microtubule stability, intracellular transport and ciliary assembly. Methylation of alpha chains at Lys-40 is found in mitotic microtubules and is required for normal mitosis and cytokinesis contributing to genomic stability. Post-translationally, nitration of Tyr-449 is irreversible and interferes with normal dynein intracellular distribution. In terms of processing, undergoes a tyrosination/detyrosination cycle, the cyclic removal and re-addition of a C-terminal tyrosine residue by the enzymes tubulin tyrosine carboxypeptidase (MATCAP1, VASH1 or VASH2) and tubulin tyrosine ligase (TTL), respectively. Tyrosination promotes microtubule interaction with CAP-Gly domain-containing proteins such as CLIP1, CLIP2 and DCTN1. Tyrosination regulates the initiation of dynein-dynactin motility via interaction with DCTN1, which brings the dynein-dynactin complex into contact with microtubules. In neurons, tyrosinated tubulins mediate the initiation of retrograde vesicle transport. Post-translationally, detyrosination is involved in metaphase plate congression by guiding chromosomes during mitosis: detyrosination promotes interaction with CENPE, promoting pole-proximal transport of chromosomes toward the equator. Detyrosination increases microtubules-dependent mechanotransduction in dystrophic cardiac and skeletal muscle. In cardiomyocytes, detyrosinated microtubules are required to resist to contractile compression during contraction: detyrosination promotes association with desmin (DES) at force-generating sarcomeres, leading to buckled microtubules and mechanical resistance to contraction.

The protein localises to the cytoplasm. It localises to the cytoskeleton. The catalysed reaction is GTP + H2O = GDP + phosphate + H(+). Functionally, tubulin is the major constituent of microtubules, a cylinder consisting of laterally associated linear protofilaments composed of alpha- and beta-tubulin heterodimers. Microtubules grow by the addition of GTP-tubulin dimers to the microtubule end, where a stabilizing cap forms. Below the cap, tubulin dimers are in GDP-bound state, owing to GTPase activity of alpha-tubulin. The chain is Tubulin alpha-1C chain (Tuba1c) from Rattus norvegicus (Rat).